A 185-amino-acid polypeptide reads, in one-letter code: Ribosome-recycling factor (185 aa).

Belongs to the RRF family.

It localises to the cytoplasm. Functionally, responsible for the release of ribosomes from messenger RNA at the termination of protein biosynthesis. May increase the efficiency of translation by recycling ribosomes from one round of translation to another. The sequence is that of Ribosome-recycling factor from Buchnera aphidicola subsp. Schizaphis graminum (strain Sg).